The sequence spans 384 residues: MVRQLILISSLLAAVAVRAAPADPAHPMVTEAPDVNLVEKRATTCTFSGSEGASKASKSKTSCSTIYLSDVAVPSGTTLDLSDLNDGTHVIFQGETTFGYEEWEGPLVRVSGTDITVEGESDAVLNGDGSRWWDGEGGNGGKTKPKFFYAHDLTSSTIKSIYIENSPVQVFSIDGSTDLTMTDITVDNTDGDTDDLAANTDGFDIGESTYITITGAEIYNQDDCVAINSGENIYFSASVCSGGHGLSIGSVGGRDDNTVKNVTFYDVNVLKSQQAIRIKTIYGDTGSVSEVTYHEIAFSDATDYGIVIEQNYDDTSKTPTTGVPITDFVLENIVGTCEDDDCTEVYIACGDGSCSDWTWTGVSVTGGSVSDDCLNVPSGISCDL.

An N-terminal signal peptide occupies residues 1 to 19 (MVRQLILISSLLAAVAVRA). The propeptide occupies 20 to 40 (APADPAHPMVTEAPDVNLVEK). Residues Cys45 and Cys63 are joined by a disulfide bond. PbH1 repeat units follow at residues 176–207 (STDL…DIGE) and 208–229 (STYI…AINS). Residue Asp222 is the Proton donor of the active site. A disulfide bond links Cys224 and Cys240. His244 is an active-site residue. 2 PbH1 repeats span residues 254–280 (RDDN…RIKT) and 288–310 (VSEV…VIEQ). Asn261 is a glycosylation site (N-linked (GlcNAc...) asparagine). Disulfide bonds link Cys349–Cys354 and Cys373–Cys382.

Belongs to the glycosyl hydrolase 28 family.

The protein resides in the secreted. The enzyme catalyses (1,4-alpha-D-galacturonosyl)n+m + H2O = (1,4-alpha-D-galacturonosyl)n + (1,4-alpha-D-galacturonosyl)m.. Functionally, involved in maceration and soft-rotting of plant tissue. Hydrolyzes the 1,4-alpha glycosidic bonds of de-esterified pectate in the smooth region of the plant cell wall. The protein is Probable endopolygalacturonase C (pgaC) of Aspergillus niger (strain ATCC MYA-4892 / CBS 513.88 / FGSC A1513).